The following is a 482-amino-acid chain: Putative metallophosphoesterase F40B5.2 (482 aa).

Helical transmembrane passes span 15-35 (MNLKLKIAIIVIGFIHVSIAI), 129-149 (ALMMLFLFLSHIAMFFYYIFL), 156-176 (IAITSLSFIAAYAHILIFLLI), and 205-225 (CYHILLALILGFIFMFAGLYT). A divalent metal cation-binding residues include D256, H258, D288, N319, H421, and H423.

The protein belongs to the metallophosphoesterase superfamily. LOC643853 family.

The protein localises to the membrane. The protein is Putative metallophosphoesterase F40B5.2 of Caenorhabditis elegans.